A 346-amino-acid polypeptide reads, in one-letter code: Free fatty acid receptor 3 (346 aa).

Over 1–19 (MDTGPDQSYFSGNHWFVFS) the chain is Extracellular. The helical transmembrane segment at 20-40 (VYLLTFLVGLPLNLLALVVFV) threads the bilayer. Residues 41 to 47 (GKLQRRP) are Cytoplasmic-facing. The chain crosses the membrane as a helical span at residues 48–68 (VAVDVLLLNLTASDLLLLLFL). Residues 69 to 88 (PFRMVEAANGMHWPLPFILC) are Extracellular-facing. An intrachain disulfide couples Cys-88 to Cys-169. Residues 89–111 (PLSGFIFFTTIYLTALFLAAVSI) form a helical membrane-spanning segment. Topologically, residues 112-132 (ERFLSVAHPLWYKTRPRLGQA) are cytoplasmic. The chain crosses the membrane as a helical span at residues 133-153 (GLVSVACWLLASAHCSVVYVI). Topologically, residues 154–178 (EFSGDISHSQGTNGTCYLEFRKDQL) are extracellular. Asn-166 carries an N-linked (GlcNAc...) asparagine glycan. The helical transmembrane segment at 179 to 199 (AILLPVRLEMAVVLFVVPLII) threads the bilayer. Residues 200 to 222 (TSYCYSRLVWILGRGGSHRRQRR) lie on the Cytoplasmic side of the membrane. A helical membrane pass occupies residues 223–243 (VAGLLAATLLNFLVCFGPYNV). Residues 244–258 (SHVVGYICGESPAWR) are Extracellular-facing. Residues 259–279 (IYVTLLSTLNSCVDPFVYYFS) form a helical membrane-spanning segment. Residues 280-346 (SSGFQADFHE…TGGQVACAES (67 aa)) lie on the Cytoplasmic side of the membrane. Positions 307–330 (MELKEQKGGEEQRADRPAERKTSE) are enriched in basic and acidic residues. Positions 307 to 346 (MELKEQKGGEEQRADRPAERKTSEHSQGCGTGGQVACAES) are disordered.

The protein belongs to the G-protein coupled receptor 1 family. In terms of tissue distribution, highest level in adipose tissue, and lower expression across all tissues tested. Expressed in sympathetic ganglia.

The protein resides in the cell membrane. Functionally, g protein-coupled receptor that is activated by a major product of dietary fiber digestion, the short chain fatty acids (SCFAs), and that plays a role in the regulation of whole-body energy homeostasis and in intestinal immunity. In omnivorous mammals, the short chain fatty acids acetate, propionate and butyrate are produced primarily by the gut microbiome that metabolizes dietary fibers. SCFAs serve as a source of energy but also act as signaling molecules. That G protein-coupled receptor is probably coupled to the pertussis toxin-sensitive, G(i/o)-alpha family of G proteins. Its activation results in the formation of inositol 1,4,5-trisphosphate, the mobilization of intracellular calcium, the phosphorylation of the MAPK3/ERK1 and MAPK1/ERK2 kinases and the inhibition of intracellular cAMP accumulation. Activated by SCFAs and by beta-hydroxybutyrate, a ketone body produced by the liver upon starvation, it inhibits N-type calcium channels and modulates the activity of sympathetic neurons through a signaling cascade involving the beta and gamma subunits of its coupled G protein, phospholipase C and MAP kinases. Thereby, it may regulate energy expenditure through the control of the sympathetic nervous system that controls for instance heart rate. Upon activation by SCFAs accumulating in the intestine, it may also signal to the brain via neural circuits which in turn would regulate intestinal gluconeogenesis. May also control the production of hormones involved in whole-body energy homeostasis. May for instance, regulate blood pressure through renin secretion. May also regulate secretion of the PYY peptide by enteroendocrine cells and control gut motility, intestinal transit rate, and the harvesting of energy from SCFAs produced by gut microbiota. May also indirectly regulate the production of LEP/Leptin, a hormone acting on the CNS to inhibit food intake, in response to the presence of short-chain fatty acids in the intestine. Finally, may also play a role in glucose homeostasis. Besides its role in energy homeostasis, may play a role in intestinal immunity. May mediate the activation of the inflammatory and immune response by SCFAs in the gut, regulating the rapid production of chemokines and cytokines by intestinal epithelial cells. Among SCFAs, the fatty acids containing less than 6 carbons, the most potent activators are probably propionate, butyrate and pentanoate while acetate is a poor activator. This is Free fatty acid receptor 3 (FFAR3) from Homo sapiens (Human).